The primary structure comprises 249 residues: tRNA pseudouridine synthase A (249 aa).

The active-site Nucleophile is Asp-53. Tyr-111 lines the substrate pocket.

It belongs to the tRNA pseudouridine synthase TruA family. In terms of assembly, homodimer.

It carries out the reaction uridine(38/39/40) in tRNA = pseudouridine(38/39/40) in tRNA. Formation of pseudouridine at positions 38, 39 and 40 in the anticodon stem and loop of transfer RNAs. In Streptococcus pneumoniae (strain P1031), this protein is tRNA pseudouridine synthase A.